We begin with the raw amino-acid sequence, 76 residues long: ATP synthase subunit c (76 aa).

2 helical membrane passes run G5–I25 and A54–L74.

This sequence belongs to the ATPase C chain family. In terms of assembly, F-type ATPases have 2 components, F(1) - the catalytic core - and F(0) - the membrane proton channel. F(1) has five subunits: alpha(3), beta(3), gamma(1), delta(1), epsilon(1). F(0) has three main subunits: a(1), b(2) and c(10-14). The alpha and beta chains form an alternating ring which encloses part of the gamma chain. F(1) is attached to F(0) by a central stalk formed by the gamma and epsilon chains, while a peripheral stalk is formed by the delta and b chains.

Its subcellular location is the cell membrane. F(1)F(0) ATP synthase produces ATP from ADP in the presence of a proton or sodium gradient. F-type ATPases consist of two structural domains, F(1) containing the extramembraneous catalytic core and F(0) containing the membrane proton channel, linked together by a central stalk and a peripheral stalk. During catalysis, ATP synthesis in the catalytic domain of F(1) is coupled via a rotary mechanism of the central stalk subunits to proton translocation. Its function is as follows. Key component of the F(0) channel; it plays a direct role in translocation across the membrane. A homomeric c-ring of between 10-14 subunits forms the central stalk rotor element with the F(1) delta and epsilon subunits. This chain is ATP synthase subunit c, found in Ruminiclostridium cellulolyticum (strain ATCC 35319 / DSM 5812 / JCM 6584 / H10) (Clostridium cellulolyticum).